The following is a 49-amino-acid chain: Omega-segestritoxin-Sf1a (49 aa).

4 disulfides stabilise this stretch: Cys-3-Cys-22, Cys-10-Cys-27, Cys-21-Cys-48, and Cys-29-Cys-46.

In terms of tissue distribution, expressed by the venom gland.

It localises to the secreted. In terms of biological role, potent and selective blocker of N-type voltage-gated calcium channels (Cav2.2/CACNA1B). Also blocks vertebrate Cav2.1/CACNA1A (P/Q-type) and Cav1.2/CACNA1C (L-type) channels at very high concentration (2 micromolar). The chain is Omega-segestritoxin-Sf1a from Segestria florentina (Tube-web spider).